Consider the following 433-residue polypeptide: MSEKKPHLNLVVIGHIDHGKSTLMGRLLYEIGAVDPRLIQQYEEEAKKMGRETWKYAWVLDKLKEEREKGITIDLGFYKFETKKYFFTLIDAPGHRDFVKNMITGASQADVALLVVSAKEGEFEAGISPAGQTREHVFLAKTMGVDQLVVAINKMDTVNYSKERYEEIKNQLIRLLRMVGYKVDEIPFIPTSAWEGVNVSKRTPEKTPWYDGPCLYEAFDFFKEPPRPIDKPLRIPIQDVYSIKGVGTVPVGRVETGVLKVGDKIIINPPKAVGEVKSIETHHTPLQEAIPGDNIGFNVKGVEKSQLRRGDVAGHTTNPPTVAEEFTGRIFVLYHPTAIAAGYTPVLHIHTATVPVTFEELLQKLDPRTGSVAEEKPQYIKQGDSAIVRFKPRKPVVVEKYSEFPPLGRFAIRDSGRTIAAGVVIDVKKAEGY.

Residues 5–227 (KPHLNLVVIG…AFDFFKEPPR (223 aa)) enclose the tr-type G domain. The G1 stretch occupies residues 14-21 (GHIDHGKS). 14 to 21 (GHIDHGKS) lines the GTP pocket. Serine 21 provides a ligand contact to Mg(2+). Residues 70–74 (GITID) form a G2 region. The G3 stretch occupies residues 91–94 (DAPG). Residues 91 to 95 (DAPGH) and 153 to 156 (NKMD) contribute to the GTP site. Positions 153–156 (NKMD) are G4. Residues 192–194 (SAW) are G5.

Belongs to the TRAFAC class translation factor GTPase superfamily. Classic translation factor GTPase family. EF-Tu/EF-1A subfamily.

It is found in the cytoplasm. The catalysed reaction is GTP + H2O = GDP + phosphate + H(+). Its function is as follows. GTP hydrolase that promotes the GTP-dependent binding of aminoacyl-tRNA to the A-site of ribosomes during protein biosynthesis. This Thermofilum pendens (strain DSM 2475 / Hrk 5) protein is Elongation factor 1-alpha.